The following is a 120-amino-acid chain: Putative iron-sulfur cluster insertion protein ErpA (120 aa).

The iron-sulfur cluster site is built by Cys49, Cys113, and Cys115.

Belongs to the HesB/IscA family. As to quaternary structure, homodimer. It depends on iron-sulfur cluster as a cofactor.

Functionally, required for insertion of 4Fe-4S clusters. In Albidiferax ferrireducens (strain ATCC BAA-621 / DSM 15236 / T118) (Rhodoferax ferrireducens), this protein is Putative iron-sulfur cluster insertion protein ErpA.